The sequence spans 427 residues: 3-phosphoshikimate 1-carboxyvinyltransferase (427 aa).

3-phosphoshikimate-binding residues include lysine 22, serine 23, and arginine 27. Lysine 22 is a binding site for phosphoenolpyruvate. Phosphoenolpyruvate contacts are provided by glycine 93 and arginine 122. 3-phosphoshikimate contacts are provided by serine 167, glutamine 169, aspartate 315, and lysine 342. Glutamine 169 lines the phosphoenolpyruvate pocket. Residue aspartate 315 is the Proton acceptor of the active site. Residues arginine 346 and arginine 387 each contribute to the phosphoenolpyruvate site.

The protein belongs to the EPSP synthase family. In terms of assembly, monomer.

It is found in the cytoplasm. The catalysed reaction is 3-phosphoshikimate + phosphoenolpyruvate = 5-O-(1-carboxyvinyl)-3-phosphoshikimate + phosphate. Its pathway is metabolic intermediate biosynthesis; chorismate biosynthesis; chorismate from D-erythrose 4-phosphate and phosphoenolpyruvate: step 6/7. Functionally, catalyzes the transfer of the enolpyruvyl moiety of phosphoenolpyruvate (PEP) to the 5-hydroxyl of shikimate-3-phosphate (S3P) to produce enolpyruvyl shikimate-3-phosphate and inorganic phosphate. This chain is 3-phosphoshikimate 1-carboxyvinyltransferase, found in Thermus thermophilus (strain ATCC 27634 / DSM 579 / HB8).